The primary structure comprises 142 residues: ATP synthase epsilon chain (142 aa).

This sequence belongs to the ATPase epsilon chain family. F-type ATPases have 2 components, CF(1) - the catalytic core - and CF(0) - the membrane proton channel. CF(1) has five subunits: alpha(3), beta(3), gamma(1), delta(1), epsilon(1). CF(0) has three main subunits: a, b and c.

It localises to the cell inner membrane. Produces ATP from ADP in the presence of a proton gradient across the membrane. In Shewanella woodyi (strain ATCC 51908 / MS32), this protein is ATP synthase epsilon chain.